A 290-amino-acid polypeptide reads, in one-letter code: N-acetylmannosamine kinase (290 aa).

ATP-binding positions include Ala5–Lys12 and Gly132–Ser139. 4 residues coordinate Zn(2+): His156, Cys166, Cys168, and Cys173.

The protein belongs to the ROK (NagC/XylR) family. NanK subfamily. As to quaternary structure, homodimer.

It carries out the reaction an N-acyl-D-mannosamine + ATP = an N-acyl-D-mannosamine 6-phosphate + ADP + H(+). It functions in the pathway amino-sugar metabolism; N-acetylneuraminate degradation; D-fructose 6-phosphate from N-acetylneuraminate: step 2/5. Its function is as follows. Catalyzes the phosphorylation of N-acetylmannosamine (ManNAc) to ManNAc-6-P. This chain is N-acetylmannosamine kinase, found in Citrobacter koseri (strain ATCC BAA-895 / CDC 4225-83 / SGSC4696).